Reading from the N-terminus, the 293-residue chain is 4-hydroxy-tetrahydrodipicolinate synthase 1 (293 aa).

T46 is a binding site for pyruvate. Y134 acts as the Proton donor/acceptor in catalysis. The active-site Schiff-base intermediate with substrate is K162. Residue I204 participates in pyruvate binding.

This sequence belongs to the DapA family. As to quaternary structure, homotetramer; dimer of dimers.

The protein resides in the cytoplasm. The catalysed reaction is L-aspartate 4-semialdehyde + pyruvate = (2S,4S)-4-hydroxy-2,3,4,5-tetrahydrodipicolinate + H2O + H(+). It functions in the pathway amino-acid biosynthesis; L-lysine biosynthesis via DAP pathway; (S)-tetrahydrodipicolinate from L-aspartate: step 3/4. Functionally, catalyzes the condensation of (S)-aspartate-beta-semialdehyde [(S)-ASA] and pyruvate to 4-hydroxy-tetrahydrodipicolinate (HTPA). This Clostridium acetobutylicum (strain ATCC 824 / DSM 792 / JCM 1419 / IAM 19013 / LMG 5710 / NBRC 13948 / NRRL B-527 / VKM B-1787 / 2291 / W) protein is 4-hydroxy-tetrahydrodipicolinate synthase 1.